Reading from the N-terminus, the 209-residue chain is Large ribosomal subunit protein bL9 (209 aa).

A disordered region spans residues 169–209; that stretch reads RDGASFTEDYDPNAEPGLATEAEEAVADADDNAETNSEESL. Residues 189-209 show a composition bias toward acidic residues; it reads EAEEAVADADDNAETNSEESL.

This sequence belongs to the bacterial ribosomal protein bL9 family.

Binds to the 23S rRNA. The protein is Large ribosomal subunit protein bL9 of Zymomonas mobilis subsp. mobilis (strain ATCC 31821 / ZM4 / CP4).